Reading from the N-terminus, the 181-residue chain is ATP synthase subunit delta (181 aa).

The protein belongs to the ATPase delta chain family. F-type ATPases have 2 components, F(1) - the catalytic core - and F(0) - the membrane proton channel. F(1) has five subunits: alpha(3), beta(3), gamma(1), delta(1), epsilon(1). F(0) has three main subunits: a(1), b(2) and c(10-14). The alpha and beta chains form an alternating ring which encloses part of the gamma chain. F(1) is attached to F(0) by a central stalk formed by the gamma and epsilon chains, while a peripheral stalk is formed by the delta and b chains.

It is found in the cell inner membrane. In terms of biological role, f(1)F(0) ATP synthase produces ATP from ADP in the presence of a proton or sodium gradient. F-type ATPases consist of two structural domains, F(1) containing the extramembraneous catalytic core and F(0) containing the membrane proton channel, linked together by a central stalk and a peripheral stalk. During catalysis, ATP synthesis in the catalytic domain of F(1) is coupled via a rotary mechanism of the central stalk subunits to proton translocation. Its function is as follows. This protein is part of the stalk that links CF(0) to CF(1). It either transmits conformational changes from CF(0) to CF(1) or is implicated in proton conduction. The polypeptide is ATP synthase subunit delta (Desulfotalea psychrophila (strain LSv54 / DSM 12343)).